Consider the following 86-residue polypeptide: Neurotoxin LmNaTx34.2 (86 aa).

The first 18 residues, 1–18, serve as a signal peptide directing secretion; the sequence is MKTLILVVIALMVIEVKS. An LCN-type CS-alpha/beta domain is found at 19–85; the sequence is DGYLMVRAGR…IWTYEKNTCS (67 aa). Disulfide bonds link Cys32–Cys84, Cys36–Cys57, Cys43–Cys64, and Cys47–Cys66.

The protein belongs to the long (4 C-C) scorpion toxin superfamily. Sodium channel inhibitor family. Beta subfamily. Expressed by the venom gland.

It is found in the secreted. Functionally, binds voltage-independently at site-4 of sodium channels (Nav) and shift the voltage of activation toward more negative potentials thereby affecting sodium channel activation and promoting spontaneous and repetitive firing. The protein is Neurotoxin LmNaTx34.2 of Lychas mucronatus (Chinese swimming scorpion).